The sequence spans 143 residues: Acyl carrier protein 3, chloroplastic (143 aa).

The N-terminal 60 residues, 1–60 (MATAAAGSSLICIKSASCSLNRAQVPSGLSSLRSVSLPISGKIFPSLRSSRGPLSFRVCC), are a transit peptide targeting the chloroplast. The Carrier domain occupies 64 to 139 (QETVTRVCEI…DAADLIEKLV (76 aa)). Residue Ser99 is modified to O-(pantetheine 4'-phosphoryl)serine.

The protein belongs to the acyl carrier protein (ACP) family. In terms of processing, 4'-phosphopantetheine is transferred from CoA to a specific serine of apo-ACP by acpS. This modification is essential for activity because fatty acids are bound in thioester linkage to the sulfhydryl of the prosthetic group.

Its subcellular location is the plastid. The protein localises to the chloroplast. The protein operates within lipid metabolism; fatty acid biosynthesis. In terms of biological role, carrier of the growing fatty acid chain in fatty acid biosynthesis. The protein is Acyl carrier protein 3, chloroplastic (ACL1.3) of Cuphea lanceolata (Cigar flower).